Consider the following 513-residue polypeptide: uncharacterized protein (513 aa).

Positions 11–219 (HLEVERKFDV…SKLARVLGAT (209 aa)) constitute a CYTH domain. The 279-residue stretch at 228 to 506 (PQPPADPVHR…LEAALRKLDK (279 aa)) folds into the CHAD domain.

This is an uncharacterized protein from Mycobacterium tuberculosis (strain ATCC 25618 / H37Rv).